Reading from the N-terminus, the 307-residue chain is Nucleotide-binding protein AAur_2084 (307 aa).

The tract at residues 1–21 is disordered; it reads MDEATAKSGTEQDGLTPVKPP. 30–37 is a binding site for ATP; sequence GMSGAGRS. Position 81 to 84 (81 to 84) interacts with GTP; that stretch reads DVRS.

This sequence belongs to the RapZ-like family.

In terms of biological role, displays ATPase and GTPase activities. The polypeptide is Nucleotide-binding protein AAur_2084 (Paenarthrobacter aurescens (strain TC1)).